Reading from the N-terminus, the 132-residue chain is Small ribosomal subunit protein uS9 (132 aa).

The segment at 103-132 is disordered; the sequence is NGLLTRDDRTKERKKPGLKRARKAPQYTKR. Over residues 114–132 the composition is skewed to basic residues; it reads ERKKPGLKRARKAPQYTKR.

The protein belongs to the universal ribosomal protein uS9 family.

This chain is Small ribosomal subunit protein uS9, found in Dehalococcoides mccartyi (strain CBDB1).